The sequence spans 664 residues: tRNA (carboxymethyluridine(34)-5-O)-methyltransferase ALKBH8 (664 aa).

One can recognise an RRM domain in the interval 45-120 (LVIANGGLGN…QKIFLYLNFV (76 aa)). Positions 220-337 (KPDQLTINQY…RTSFTFRKVR (118 aa)) constitute a Fe2OG dioxygenase domain. 227–229 (NQY) contacts 2-oxoglutarate. Fe cation-binding residues include His-238 and Asp-240. His-242 is a Zn(2+) binding site. Residue His-292 participates in Fe cation binding. Positions 328 and 334 each coordinate 2-oxoglutarate. Zn(2+) is bound by residues Cys-341, Cys-343, and Cys-349. The segment at 411–664 (ADIGCGNGKY…GNWCVVLQKV (254 aa)) is methyltransferase domain.

This sequence belongs to the alkB family. As to quaternary structure, interacts with TRMT112. Fe(2+) serves as cofactor.

It is found in the cytoplasm. The protein resides in the nucleus. It carries out the reaction 5-(carboxymethyl)uridine(34) in tRNA + S-adenosyl-L-methionine = 5-(2-methoxy-2-oxoethyl)uridine(34) in tRNA + S-adenosyl-L-homocysteine. In terms of biological role, catalyzes the methylation of 5-carboxymethyl uridine to 5-methylcarboxymethyl uridine at the wobble position of the anticodon loop in tRNA via its methyltransferase domain. Catalyzes the last step in the formation of 5-methylcarboxymethyl uridine at the wobble position of the anticodon loop in target tRNA. Has a preference for tRNA(Arg) and tRNA(Glu), and does not bind tRNA(Lys). Binds tRNA and catalyzes the iron and alpha-ketoglutarate dependent hydroxylation of 5-methylcarboxymethyl uridine at the wobble position of the anticodon loop in tRNA via its dioxygenase domain, giving rise to 5-(S)-methoxycarbonylhydroxymethyluridine; has a preference for tRNA(Gly). Required for normal survival after DNA damage. May inhibit apoptosis and promote cell survival and angiogenesis. The polypeptide is tRNA (carboxymethyluridine(34)-5-O)-methyltransferase ALKBH8 (Alkbh8) (Mus musculus (Mouse)).